We begin with the raw amino-acid sequence, 212 residues long: B3 domain-containing protein Os04g0386900 (212 aa).

The disordered stretch occupies residues 1-78 (MRAATALPSI…PRPPEPEPEK (78 aa)). Composition is skewed to low complexity over residues 8–23 (PSIP…ASDP) and 36–46 (DAGAEDPAAVD). Positions 93–191 (FTCIMCKSHV…EFRVQVLRAE (99 aa)) form a DNA-binding region, TF-B3.

The protein resides in the nucleus. The sequence is that of B3 domain-containing protein Os04g0386900 from Oryza sativa subsp. japonica (Rice).